We begin with the raw amino-acid sequence, 158 residues long: Small ribosomal subunit protein uS7 (158 aa).

Belongs to the universal ribosomal protein uS7 family. In terms of assembly, part of the 30S ribosomal subunit. Contacts proteins S9 and S11.

Its function is as follows. One of the primary rRNA binding proteins, it binds directly to 16S rRNA where it nucleates assembly of the head domain of the 30S subunit. Is located at the subunit interface close to the decoding center, probably blocks exit of the E-site tRNA. The protein is Small ribosomal subunit protein uS7 of Gluconobacter oxydans (strain 621H) (Gluconobacter suboxydans).